The following is a 508-amino-acid chain: Bestrophin-2 (508 aa).

Over 1-31 the chain is Cytoplasmic; sequence MTVTYTARVANARFGGFSQLLLLWRGSIYKL. Alanine 10 lines the Ca(2+) pocket. Residues 32 to 51 form a helical membrane-spanning segment; the sequence is LWRELLCFLGLYMALSAAYR. Residues 52–60 lie on the Extracellular side of the membrane; the sequence is FLLAEEQKR. The helical transmembrane segment at 61 to 82 threads the bilayer; the sequence is YFEKLVIYCDQYASLIPVSFVL. Residues 83–238 are Cytoplasmic-facing; that stretch reads GFYVTLVVHR…WISIPLVYTQ (156 aa). A helical transmembrane segment spans residues 239-255; sequence VVTIAVYSYFLACLIGR. Residues 256–274 lie on the Extracellular side of the membrane; that stretch reads QFLDPAQGYKDHTLDLCVP. The helical transmembrane segment at 275-288 threads the bilayer; sequence IFTLLQFFFYAGWL. Residues 289-508 lie on the Cytoplasmic side of the membrane; it reads KVAEQLINPF…PIGEEEESPA (220 aa). Residues glutamine 293, asparagine 296, aspartate 301, and aspartate 304 each contribute to the Ca(2+) site. The interval 455-508 is disordered; the sequence is LREPELEPPACPEPPAPIPGPTPEPFTTVSIPGPRAPAPPWLPSPIGEEEESPA. Pro residues-rich tracts occupy residues 461–478 and 488–497; these read EPPA…PTPE and PRAPAPPWLP.

It belongs to the anion channel-forming bestrophin (TC 1.A.46) family. Calcium-sensitive chloride channel subfamily. As to quaternary structure, pentamer. Interacts with GLUL; this interaction tethers a fraction of GLUL to the membrane, causing a decrease of cytosolic glutamine synthase (GS) activity and inhibits the chloride channel activity of BEST2 by affecting the gating at the aperture in the absence of intracellular glutamate. In terms of tissue distribution, expressed in mucin-secreting colonic goblet cells.

It localises to the cell membrane. The protein resides in the basolateral cell membrane. The catalysed reaction is chloride(in) = chloride(out). It carries out the reaction hydrogencarbonate(in) = hydrogencarbonate(out). The enzyme catalyses L-glutamate(out) = L-glutamate(in). It catalyses the reaction iodide(out) = iodide(in). The catalysed reaction is L-glutamine(out) = L-glutamine(in). Chloride channel activity is allosterically inhibited by GLUL/glutamine synthase (GS) which affects the gating at the aperture in the absence of intracellular glutamate. Inhibitory effect of GLUL is relieved upon increasing of intracellular level of L-glutamate. Ligand-gated anion channel that allows the movement of anions across cell membranes when activated by calcium (Ca2+). Transports a large specter of anions, namely mediates the movement of chloride, L-glutamate and iodide. Calcium-binding triggers the dilation of the aperture, but calcium-dependent gating is only effective when the size of the passing anion is bigger than the closed aperture. Mediates the calcium-activated hydrogencarbonate movement and participates in colonic hydrogencarbonate secretion concomitant with mucin secretion. In non-pigmented epithelium (NPE), mediates the efflux of intracellular L-glutamate; binding of intracellular L-glutamate activates and open both the neck and the aperture of the channel, leading to L-glutamate exit promoting chloride influx movement from the extracellular side in trans. Also exhibits a directional permeability for intracellular glutamine, in a similar manner as for L-glutamate. The sequence is that of Bestrophin-2 from Mus musculus (Mouse).